Consider the following 357-residue polypeptide: Phenylalanine--tRNA ligase alpha subunit (357 aa).

E257 serves as a coordination point for Mg(2+).

It belongs to the class-II aminoacyl-tRNA synthetase family. Phe-tRNA synthetase alpha subunit type 1 subfamily. Tetramer of two alpha and two beta subunits. It depends on Mg(2+) as a cofactor.

The protein localises to the cytoplasm. It carries out the reaction tRNA(Phe) + L-phenylalanine + ATP = L-phenylalanyl-tRNA(Phe) + AMP + diphosphate + H(+). The chain is Phenylalanine--tRNA ligase alpha subunit from Ruegeria pomeroyi (strain ATCC 700808 / DSM 15171 / DSS-3) (Silicibacter pomeroyi).